The chain runs to 450 residues: Tubulin alpha chain (450 aa).

Glutamine 11 provides a ligand contact to GTP. Lysine 40 is subject to N6-acetyllysine. 7 residues coordinate GTP: glutamate 71, serine 140, glycine 144, threonine 145, threonine 179, asparagine 206, and asparagine 228. Glutamate 71 contacts Mg(2+). The active site involves glutamate 254.

This sequence belongs to the tubulin family. In terms of assembly, dimer of alpha and beta chains. A typical microtubule is a hollow water-filled tube with an outer diameter of 25 nm and an inner diameter of 15 nM. Alpha-beta heterodimers associate head-to-tail to form protofilaments running lengthwise along the microtubule wall with the beta-tubulin subunit facing the microtubule plus end conferring a structural polarity. Microtubules usually have 13 protofilaments but different protofilament numbers can be found in some organisms and specialized cells. Requires Mg(2+) as cofactor. Post-translationally, acetylation of alpha chains at Lys-40 stabilizes microtubules and affects affinity and processivity of microtubule motors. This modification has a role in multiple cellular functions, ranging from cell motility, cell cycle progression or cell differentiation to intracellular trafficking and signaling.

It is found in the cytoplasm. Its subcellular location is the cytoskeleton. It carries out the reaction GTP + H2O = GDP + phosphate + H(+). Functionally, tubulin is the major constituent of microtubules, a cylinder consisting of laterally associated linear protofilaments composed of alpha- and beta-tubulin heterodimers. Microtubules grow by the addition of GTP-tubulin dimers to the microtubule end, where a stabilizing cap forms. Below the cap, tubulin dimers are in GDP-bound state, owing to GTPase activity of alpha-tubulin. The polypeptide is Tubulin alpha chain (Tyrophagus putrescentiae (Mold mite)).